The chain runs to 101 residues: MELAVIGKSEFVTGFRLAGIRKVYEIVDVPSSESAVKSVLEDKSIGILVMHNDDISNLPEILRRNLNESVQPTVVALGGTGEGSMSLRDKIKQAVGVDLWK.

The protein belongs to the V-ATPase F subunit family. As to quaternary structure, has multiple subunits with at least A(3), B(3), C, D, E, F, H, I and proteolipid K(x).

The protein localises to the cell membrane. Its function is as follows. Component of the A-type ATP synthase that produces ATP from ADP in the presence of a proton gradient across the membrane. This Methanosarcina acetivorans (strain ATCC 35395 / DSM 2834 / JCM 12185 / C2A) protein is A-type ATP synthase subunit F.